The following is a 447-amino-acid chain: Signal recognition particle 54 kDa protein (447 aa).

GTP contacts are provided by residues 108–115 (GLYGMGKT), 188–192 (DTAGR), and 246–249 (TKLD).

This sequence belongs to the GTP-binding SRP family. SRP54 subfamily. As to quaternary structure, part of the signal recognition particle protein translocation system, which is composed of SRP and FtsY. Archaeal SRP consists of a 7S RNA molecule of 300 nucleotides and two protein subunits: SRP54 and SRP19.

The protein localises to the cytoplasm. The catalysed reaction is GTP + H2O = GDP + phosphate + H(+). Functionally, involved in targeting and insertion of nascent membrane proteins into the cytoplasmic membrane. Binds to the hydrophobic signal sequence of the ribosome-nascent chain (RNC) as it emerges from the ribosomes. The SRP-RNC complex is then targeted to the cytoplasmic membrane where it interacts with the SRP receptor FtsY. This chain is Signal recognition particle 54 kDa protein, found in Methanopyrus kandleri (strain AV19 / DSM 6324 / JCM 9639 / NBRC 100938).